The chain runs to 936 residues: Periplasmic nitrate reductase (936 aa).

The tat-type signal signal peptide spans 1 to 31 (MALSRRDFLKSSAAAAAASAVGLSVPKEVEA). The 57-residue stretch at 40-96 (WRWDKAVCRFCGTGCGIMIATKDDRIVAVKGDPLAPVNRGLNCIKGYFTAKIMYGAD) folds into the 4Fe-4S Mo/W bis-MGD-type domain. Residues Cys47, Cys50, Cys54, and Cys82 each coordinate [4Fe-4S] cluster. Mo-bis(molybdopterin guanine dinucleotide) is bound by residues Lys84, Gln152, Asn177, Cys181, 214 to 221 (WGSNMAEM), 246 to 250 (STYTH), Met424, Gln428, Asn534, 559 to 560 (SD), Lys582, Asp609, and 826 to 835 (TGRVLEHWHS). Trp902 serves as a coordination point for substrate. The Mo-bis(molybdopterin guanine dinucleotide) site is built by Asn910 and Lys927.

Belongs to the prokaryotic molybdopterin-containing oxidoreductase family. NasA/NapA/NarB subfamily. In terms of assembly, component of the periplasmic nitrate reductase NapAB complex composed of NapA and NapB. Requires [4Fe-4S] cluster as cofactor. Mo-bis(molybdopterin guanine dinucleotide) is required as a cofactor. In terms of processing, predicted to be exported by the Tat system. The position of the signal peptide cleavage has not been experimentally proven.

The protein localises to the periplasm. It catalyses the reaction 2 Fe(II)-[cytochrome] + nitrate + 2 H(+) = 2 Fe(III)-[cytochrome] + nitrite + H2O. Its function is as follows. Catalytic subunit of the periplasmic nitrate reductase complex NapAB. Receives electrons from NapB and catalyzes the reduction of nitrate to nitrite. This is Periplasmic nitrate reductase from Nitratiruptor sp. (strain SB155-2).